The following is a 347-amino-acid chain: NADH-ubiquinone oxidoreductase chain 2 (347 aa).

Transmembrane regions (helical) follow at residues 3-23 (PPIF…VMTS), 25-45 (HWML…PILM), 59-79 (YFLT…INLL), 96-116 (ILMT…FWVP), 122-142 (IPLS…LSVL), 149-169 (INPN…GWGG), 178-198 (ILAY…LYNP), 201-221 (MILN…LFML), 237-257 (MPLI…LPPL), 274-294 (EMII…YFYM), and 325-345 (FLPP…MISI).

Belongs to the complex I subunit 2 family. As to quaternary structure, core subunit of respiratory chain NADH dehydrogenase (Complex I) which is composed of 45 different subunits. Interacts with TMEM242.

Its subcellular location is the mitochondrion inner membrane. The enzyme catalyses a ubiquinone + NADH + 5 H(+)(in) = a ubiquinol + NAD(+) + 4 H(+)(out). Core subunit of the mitochondrial membrane respiratory chain NADH dehydrogenase (Complex I) which catalyzes electron transfer from NADH through the respiratory chain, using ubiquinone as an electron acceptor. Essential for the catalytic activity and assembly of complex I. The sequence is that of NADH-ubiquinone oxidoreductase chain 2 from Genetta servalina (Servaline genet).